Reading from the N-terminus, the 290-residue chain is Protein male abnormal 3 (290 aa).

DNA-binding regions (DM) lie at residues 28-74 (CQRC…SKKK) and 94-142 (CARC…KLRR). Disordered regions lie at residues 139–167 (KLRR…MDME) and 179–202 (IIGT…LSMS). Over residues 146 to 155 (KSRDGKEPKR) the composition is skewed to basic and acidic residues. Positions 182-202 (TSASPSPSSTTDTMSPSLSMS) are enriched in low complexity.

Expression is undetectable in hermaphrodites, but persists in males. In males, expressed in cells of the tail tip.

The protein resides in the nucleus. Functionally, transcription factor which binds the DNA motif 5'-[CGA][TCA][TA]ACAATGT[AT][TGA]C-3', probably as a monomer. Acts partially redundantly with the transcription factor dmd-3 to coordinate tail tip cell fusion and retraction and thereby regulate male tail tip morphogenesis. Promotes male-specific development of two tissues, the peripheral nervous system and the intestine. In the peripheral nervous system, directs differentiation of sensory ray neuroblasts into peripheral sense organs. In the intestine, causes repression of vitellogenin gene transcription. This is Protein male abnormal 3 from Caenorhabditis elegans.